Here is a 135-residue protein sequence, read N- to C-terminus: UPF0299 membrane protein PC1_1498 (135 aa).

Transmembrane regions (helical) follow at residues 5–25 (FIVC…LLAG), 30–50 (ALLP…FTLL), 63–83 (GCHL…VGVM), and 93–113 (FGPI…VVGF).

Belongs to the UPF0299 family.

It is found in the cell inner membrane. The sequence is that of UPF0299 membrane protein PC1_1498 from Pectobacterium carotovorum subsp. carotovorum (strain PC1).